Consider the following 375-residue polypeptide: MDALQLANSAFAVDMFKQLCEKEPVGNVLFSPICLSTSLSLAQVGAKGDTANEIGQVLHFENVKDVPFGFQTVTSDVNKLSSFYSLKLIKRLYVDKSLNLSTEFISSTKRPYAKELETVDFKDKLEETKGQINNSIKDLTDGHFENILADNSVSNQTKILVVNAAYFVGKWMKKFPESETKECPFRVNKTDTKPVQMMNIEATFCMGNIDSIDCKIIELPFQNKHLSMFILLPKDVEDESTGLEKIEKQLNSEALAQWTNPSTMANAKVKLSIPKFKVEKIIDPKASLENLGLKRIFSEDTSDFSGMSETKGVALSNVIHKVCLEITEDGGDSIEVPGARILQHKDELNADHPFVYIIRHNKTRNIIFFGKFCSP.

Asn99, Asn133, Asn155, Asn188, and Asn361 each carry an N-linked (GlcNAc...) asparagine glycan.

It belongs to the serpin family. Ov-serpin subfamily. In terms of assembly, interacts with IRF6.

Its subcellular location is the secreted. The protein localises to the extracellular space. In terms of biological role, tumor suppressor. It blocks the growth, invasion, and metastatic properties of mammary tumors. As it does not undergo the S (stressed) to R (relaxed) conformational transition characteristic of active serpins, it exhibits no serine protease inhibitory activity. This Plecturocebus moloch (Dusky titi monkey) protein is Serpin B5 (SERPINB5).